Here is a 323-residue protein sequence, read N- to C-terminus: Protein prune homolog 2 (323 aa).

Disordered stretches follow at residues 1–67 (MDIP…EIDI) and 79–110 (DSFE…AEEE). Residues 40 to 52 (PNINLSLDQSEGS) show a composition bias toward polar residues. The span at 57 to 67 (DNLDSPDEIDI) shows a compositional bias: acidic residues. The region spanning 130-291 (DMKVIEPYRR…SIIKLDEELR (162 aa)) is the CRAL-TRIO domain.

Its subcellular location is the cytoplasm. Functionally, may play an important role in regulating differentiation, survival and aggressiveness of the tumor cells. This Pongo abelii (Sumatran orangutan) protein is Protein prune homolog 2 (PRUNE2).